Reading from the N-terminus, the 195-residue chain is CASP-like protein 1B1 (195 aa).

The Cytoplasmic segment spans residues 1-15 (MAKLALAATSGKSCK). The helical transmembrane segment at 16–36 (ILLGLRLLAFSATLSAAIVMG) threads the bilayer. The Extracellular segment spans residues 37–67 (LNKETETFVVGKVGNTPIKATFTAKFDHTPA). Residues 68-88 (FVFFVVANAMVSFHNLLMIAL) traverse the membrane as a helical segment. Residues 89-104 (QIFGGKMEFTGFRLLS) lie on the Cytoplasmic side of the membrane. Residues 105 to 125 (VAILDMLNVTLISAAANAAAF) form a helical membrane-spanning segment. Residues 126-154 (MAEVGKNGNKHARWDKICDRFATYCDHGA) lie on the Extracellular side of the membrane. A helical membrane pass occupies residues 155–175 (GALIAAFAGVILMLIISAASI). Residues 176 to 195 (SRLAQQNKCCSTTASPSVVP) are Cytoplasmic-facing.

It belongs to the Casparian strip membrane proteins (CASP) family. Homodimer and heterodimers.

The protein localises to the cell membrane. The sequence is that of CASP-like protein 1B1 from Arabidopsis lyrata subsp. lyrata (Lyre-leaved rock-cress).